The primary structure comprises 79 residues: Protein VdcD (79 aa).

Functionally, involved in the non-oxidative decarboxylation and detoxification of phenolic derivatives under both aerobic and anaerobic conditions, however the precise biochemical function of VdcD in metabolism of phenolic acid is unknown. The protein is Protein VdcD of Streptomyces sp. (strain D7).